Here is a 1226-residue protein sequence, read N- to C-terminus: 3-hydroxy-3-methylglutaryl-coenzyme A reductase (1226 aa).

5 consecutive transmembrane segments (helical) span residues 17–37, 224–244, 252–272, 337–357, and 373–393; these read IETI…ILSG, ILVV…LFLA, FWLS…TLPM, VGNM…VGVN, and LLAM…TIMV. In terms of domain architecture, SSD spans 223–391; the sequence is DILVVLTGYI…FTLYTAVLTI (169 aa). The segment at 428 to 449 is disordered; sequence LSRKSSKQSVTEPETTKNLRQR. Residues 434-445 show a composition bias toward polar residues; it reads KQSVTEPETTKN. The chain crosses the membrane as a helical span at residues 481–501; sequence LLLIASFLTLHILNFCTTLTS. 2 disordered regions span residues 683–702 and 722–742; these read APAP…PPPL and LPIR…EVEP. The segment covering 685–702 has biased composition (pro residues); the sequence is APAPAPEPEPPVNRPPPL. The Charge relay system role is filled by Glu-869. 875 to 881 contacts CoA; sequence STSRGCK. Residues 936–938 and 963–971 contribute to the NADP(+) site; these read SRF and DAMGMNMIS. The Charge relay system role is filled by Lys-1001. 1030–1032 serves as a coordination point for CoA; that stretch reads VLK. Asp-1077 acts as the Charge relay system in catalysis. A helical transmembrane segment spans residues 1150 to 1170; it reads IIASAVMAGELSLISALAAGH. 1174–1175 lines the CoA pocket; it reads AH. The active-site Proton donor is the His-1175. Residue 1179-1180 participates in NADP(+) binding; the sequence is NR. The interval 1182-1226 is disordered; that stretch reads QLNTPMPSRPHTPGPEDVSHVQQLPTPSASDDKGVTAQGYVVEAK. Positions 1201–1210 are enriched in polar residues; that stretch reads HVQQLPTPSA.

This sequence belongs to the HMG-CoA reductase family.

It localises to the endoplasmic reticulum membrane. The catalysed reaction is (R)-mevalonate + 2 NADP(+) + CoA = (3S)-3-hydroxy-3-methylglutaryl-CoA + 2 NADPH + 2 H(+). It participates in metabolic intermediate biosynthesis; (R)-mevalonate biosynthesis; (R)-mevalonate from acetyl-CoA: step 3/3. In terms of biological role, HMG-CoA reductase; part of the first module of ergosterol biosynthesis pathway that includes the early steps of the pathway, conserved across all eukaryotes, and which results in the formation of mevalonate from acetyl-coenzyme A (acetyl-CoA). This module also plays a key role in the biosynthesis of triterpenes such as ganoderic acids (GA), a group of highly oxygenated lanostane-type triterpenoids which are well recognized as a main group of unique bioactive compounds in the medicinal mushroom Ganoderma lucidum. In this module, the acetyl-CoA acetyltransferase catalyzes the formation of acetoacetyl-CoA. The hydroxymethylglutaryl-CoA synthase HMGS then condenses acetyl-CoA with acetoacetyl-CoA to form HMG-CoA. The rate-limiting step of the early module is the reduction to mevalonate by the 3-hydroxy-3-methylglutaryl-coenzyme A (HMG-CoA) reductase. In Ganoderma lucidum (Ling zhi medicinal fungus), this protein is 3-hydroxy-3-methylglutaryl-coenzyme A reductase.